The primary structure comprises 257 residues: Ribosomal RNA small subunit methyltransferase J (257 aa).

S-adenosyl-L-methionine contacts are provided by residues 107-108, 123-124, and Asp-177; these read RD and ER.

The protein belongs to the methyltransferase superfamily. RsmJ family.

The protein localises to the cytoplasm. It catalyses the reaction guanosine(1516) in 16S rRNA + S-adenosyl-L-methionine = N(2)-methylguanosine(1516) in 16S rRNA + S-adenosyl-L-homocysteine + H(+). In terms of biological role, specifically methylates the guanosine in position 1516 of 16S rRNA. This chain is Ribosomal RNA small subunit methyltransferase J, found in Haemophilus influenzae (strain PittGG).